We begin with the raw amino-acid sequence, 81 residues long: ATP synthase subunit c (81 aa).

2 helical membrane-spanning segments follow: residues 5 to 25 and 57 to 77; these read IAAG…IGAG and VGLV…FVFA.

It belongs to the ATPase C chain family. F-type ATPases have 2 components, F(1) - the catalytic core - and F(0) - the membrane proton channel. F(1) has five subunits: alpha(3), beta(3), gamma(1), delta(1), epsilon(1). F(0) has three main subunits: a(1), b(2) and c(10-14). The alpha and beta chains form an alternating ring which encloses part of the gamma chain. F(1) is attached to F(0) by a central stalk formed by the gamma and epsilon chains, while a peripheral stalk is formed by the delta and b chains.

It is found in the cell membrane. In terms of biological role, f(1)F(0) ATP synthase produces ATP from ADP in the presence of a proton or sodium gradient. F-type ATPases consist of two structural domains, F(1) containing the extramembraneous catalytic core and F(0) containing the membrane proton channel, linked together by a central stalk and a peripheral stalk. During catalysis, ATP synthesis in the catalytic domain of F(1) is coupled via a rotary mechanism of the central stalk subunits to proton translocation. Its function is as follows. Key component of the F(0) channel; it plays a direct role in translocation across the membrane. A homomeric c-ring of between 10-14 subunits forms the central stalk rotor element with the F(1) delta and epsilon subunits. In Mycobacterium bovis (strain ATCC BAA-935 / AF2122/97), this protein is ATP synthase subunit c.